The sequence spans 496 residues: uncharacterized protein (496 aa).

A run of 12 helical transmembrane segments spans residues 33–53 (FLKGLLSAITLLFFILLLIFA), 89–109 (LNFLIVFRFFILSFTLFYTLI), 127–147 (PWFVLYLVIATISFLLFFTFF), 154–174 (VFNLVFLLLVLFLLNLSYEIF), 193–213 (LIIAMVFQALLLLFVIITPLV), 247–267 (IILIAFFFFLITFIVLANTNF), 285–305 (LWFILLLFSAIFIWLLRVFAY), 320–340 (LWVYILQSFFAIIILILYMVF), 355–375 (LLNLVVTQTILSLSLFLVTLF), 382–402 (SLINVFITITVQMSVFGIYIF), 411–431 (LLVLLKVIMILIILTAAIVGF), and 455–475 (VQIMLLLNFSLNFTLISYLTI).

Its subcellular location is the cell membrane. This is an uncharacterized protein from Ureaplasma parvum serovar 3 (strain ATCC 700970).